The chain runs to 69 residues: UPF0150 protein AF_1072 (69 aa).

This sequence belongs to the UPF0150 family.

This is UPF0150 protein AF_1072 from Archaeoglobus fulgidus (strain ATCC 49558 / DSM 4304 / JCM 9628 / NBRC 100126 / VC-16).